The primary structure comprises 29 residues: Sarcolamban B (29 aa).

A helical membrane pass occupies residues 7-27; it reads LFTTFLILAFLLFLLYAFYEA.

As to quaternary structure, interacts with SERCA. In terms of tissue distribution, strongly expressed in embryonic and larval somatic muscles and postembryonic heart.

It localises to the sarcoplasmic reticulum membrane. Plays an essential role in the regulation of calcium transport at the sarcoplasmic reticulum (SR), which is secondarily required for regular muscle contraction. This Drosophila melanogaster (Fruit fly) protein is Sarcolamban B.